Consider the following 316-residue polypeptide: Transaldolase (316 aa).

K125 functions as the Schiff-base intermediate with substrate in the catalytic mechanism.

It belongs to the transaldolase family. Type 1 subfamily. Homodimer.

The protein localises to the cytoplasm. It carries out the reaction D-sedoheptulose 7-phosphate + D-glyceraldehyde 3-phosphate = D-erythrose 4-phosphate + beta-D-fructose 6-phosphate. The protein operates within carbohydrate degradation; pentose phosphate pathway; D-glyceraldehyde 3-phosphate and beta-D-fructose 6-phosphate from D-ribose 5-phosphate and D-xylulose 5-phosphate (non-oxidative stage): step 2/3. Functionally, transaldolase is important for the balance of metabolites in the pentose-phosphate pathway. The chain is Transaldolase from Acidovorax ebreus (strain TPSY) (Diaphorobacter sp. (strain TPSY)).